A 227-amino-acid chain; its full sequence is Staphylococcal superantigen-like 10 (227 aa).

A signal peptide spans 1–30; it reads MKFTALAKATLALGILTTGTLTTEVHSGHA.

The protein belongs to the staphylococcal/streptococcal toxin family. As to quaternary structure, interacts with prothrombin/F2 and coagulation factor X/F12. Interacts with human CXCR4.

The protein localises to the secreted. Its function is as follows. Plays a role in the inhibition of host complement activation via the classical pathway by interacting with the Fc region of human IgG and thereby interfering with the IgG/C1q interaction. Also inhibits the penultimate step of plasma clotting by interacting with prothrombin/F2 and coagulation factor X/F12. Does not affect the protease activity of thrombin but interferes with the conversion of prothrombin to thrombin. Interacts with human receptor CXCR4 and specifically inhibits CXCL12-induced calcium mobilization and cell migration. The sequence is that of Staphylococcal superantigen-like 10 from Staphylococcus aureus (strain NCTC 8325 / PS 47).